Reading from the N-terminus, the 92-residue chain is Alpha-elapitoxin-Lh2a (92 aa).

A signal peptide spans 1–21 (MKTLLLTLVVVTIVCLDLGDS). 5 cysteine pairs are disulfide-bonded: C24-C41, C34-C62, C47-C51, C66-C77, and C78-C83.

This sequence belongs to the three-finger toxin family. Long-chain subfamily. Type II alpha-neurotoxin sub-subfamily. Expressed by the venom gland.

It localises to the secreted. Binds with high affinity to muscular (alpha-1/CHRNA1) and neuronal (alpha-7/CHRNA7) nicotinic acetylcholine receptor (nAChR) and inhibits acetylcholine from binding to the receptor, thereby impairing neuromuscular and neuronal transmission. The protein is Alpha-elapitoxin-Lh2a of Hydrophis hardwickii (Hardwick's spine-bellied seasnake).